We begin with the raw amino-acid sequence, 355 residues long: Probable aldo-keto reductase 3 (355 aa).

The active-site Proton donor is the Y70. H138 contributes to the substrate binding site. 217-227 (SPLGRGFFSSG) is an NADP(+) binding site.

It belongs to the aldo/keto reductase family.

The sequence is that of Probable aldo-keto reductase 3 from Oryza sativa subsp. indica (Rice).